We begin with the raw amino-acid sequence, 285 residues long: SLAM family member 8 (285 aa).

Residues 1–22 form the signal peptide; sequence MVMRPLWSLLLWEALLPITVTG. At 23-233 the chain is on the extracellular side; that stretch reads AQVLSKVGGS…AAPGKASYKD (211 aa). The N-linked (GlcNAc...) asparagine glycan is linked to N85. The 88-residue stretch at 128-215 folds into the Ig-like C2-type domain; the sequence is PVVQVFIAVE…PVSWDLATVT (88 aa). C152 and C201 form a disulfide bridge. Residues 234 to 254 form a helical membrane-spanning segment; it reads VLLVVVPVSLLLMLVTLFSAW. The Cytoplasmic segment spans residues 255 to 285; it reads HWCPCSGKKKKDVHADRVGPETENPLVQDLP. The segment at 262–285 is disordered; it reads KKKKDVHADRVGPETENPLVQDLP.

In terms of tissue distribution, expressed in lymph node, spleen, thymus and bone marrow.

It is found in the membrane. Functionally, may play a role in B-lineage commitment and/or modulation of signaling through the B-cell receptor. This is SLAM family member 8 (SLAMF8) from Homo sapiens (Human).